Reading from the N-terminus, the 314-residue chain is 4-hydroxy-3-methylbut-2-enyl diphosphate reductase (314 aa).

A [4Fe-4S] cluster-binding site is contributed by C12. (2E)-4-hydroxy-3-methylbut-2-enyl diphosphate-binding residues include H41 and H74. 2 residues coordinate dimethylallyl diphosphate: H41 and H74. H41 and H74 together coordinate isopentenyl diphosphate. C96 contributes to the [4Fe-4S] cluster binding site. A (2E)-4-hydroxy-3-methylbut-2-enyl diphosphate-binding site is contributed by H124. H124 lines the dimethylallyl diphosphate pocket. H124 is a binding site for isopentenyl diphosphate. Residue E126 is the Proton donor of the active site. T167 serves as a coordination point for (2E)-4-hydroxy-3-methylbut-2-enyl diphosphate. C197 contacts [4Fe-4S] cluster. (2E)-4-hydroxy-3-methylbut-2-enyl diphosphate-binding residues include S225, S226, N227, and S269. S225, S226, N227, and S269 together coordinate dimethylallyl diphosphate. Residues S225, S226, N227, and S269 each contribute to the isopentenyl diphosphate site.

The protein belongs to the IspH family. It depends on [4Fe-4S] cluster as a cofactor.

It carries out the reaction isopentenyl diphosphate + 2 oxidized [2Fe-2S]-[ferredoxin] + H2O = (2E)-4-hydroxy-3-methylbut-2-enyl diphosphate + 2 reduced [2Fe-2S]-[ferredoxin] + 2 H(+). The catalysed reaction is dimethylallyl diphosphate + 2 oxidized [2Fe-2S]-[ferredoxin] + H2O = (2E)-4-hydroxy-3-methylbut-2-enyl diphosphate + 2 reduced [2Fe-2S]-[ferredoxin] + 2 H(+). The protein operates within isoprenoid biosynthesis; dimethylallyl diphosphate biosynthesis; dimethylallyl diphosphate from (2E)-4-hydroxy-3-methylbutenyl diphosphate: step 1/1. Its pathway is isoprenoid biosynthesis; isopentenyl diphosphate biosynthesis via DXP pathway; isopentenyl diphosphate from 1-deoxy-D-xylulose 5-phosphate: step 6/6. Catalyzes the conversion of 1-hydroxy-2-methyl-2-(E)-butenyl 4-diphosphate (HMBPP) into a mixture of isopentenyl diphosphate (IPP) and dimethylallyl diphosphate (DMAPP). Acts in the terminal step of the DOXP/MEP pathway for isoprenoid precursor biosynthesis. The sequence is that of 4-hydroxy-3-methylbut-2-enyl diphosphate reductase from Aliivibrio fischeri (strain MJ11) (Vibrio fischeri).